Reading from the N-terminus, the 462-residue chain is Probable serine/threonine-protein kinase DDB_G0286841 (462 aa).

Residues 64-358 (FNFLKVISKG…VDEVKCHPFF (295 aa)) enclose the Protein kinase domain. ATP is bound by residues 70–78 (ISKGGFGKV) and K93. Residue D188 is the Proton acceptor of the active site. The AGC-kinase C-terminal domain maps to 359–462 (SEINWKIYED…LFIDFDFPTY (104 aa)). The segment covering 414–439 (NIYKNNNNNNNNNNNNNNNNNNNNNN) has biased composition (low complexity). Residues 414–447 (NIYKNNNNNNNNNNNNNNNNNNNNNNDDNDDENN) form a disordered region.

This sequence belongs to the protein kinase superfamily. AGC Ser/Thr protein kinase family.

It carries out the reaction L-seryl-[protein] + ATP = O-phospho-L-seryl-[protein] + ADP + H(+). The catalysed reaction is L-threonyl-[protein] + ATP = O-phospho-L-threonyl-[protein] + ADP + H(+). The polypeptide is Probable serine/threonine-protein kinase DDB_G0286841 (Dictyostelium discoideum (Social amoeba)).